A 399-amino-acid chain; its full sequence is Guanine nucleotide-binding protein negative regulator 1 (399 aa).

WD repeat units lie at residues 44 to 83, 105 to 145, 150 to 194, 207 to 247, 252 to 292, and 296 to 337; these read KPLN…LSKK, YSYS…NKAS, DHQE…VMTT, SLKG…PCQL, ERGN…DMVY, and GHRG…EETH.

In terms of assembly, interacts with gpa1.

Its subcellular location is the cytoplasm. Negatively regulates the pheromone-response pathway. Acts as a structural mimic of the G protein beta subunit thereby interacting with gpa1 which then inhibits gpa1 signaling. In Schizosaccharomyces pombe (strain 972 / ATCC 24843) (Fission yeast), this protein is Guanine nucleotide-binding protein negative regulator 1 (gnr1).